The chain runs to 880 residues: Valine--tRNA ligase (880 aa).

The 'HIGH' region motif lies at 49 to 59; that stretch reads PNVTGKLHLGH. A 'KMSKS' region motif is present at residues 525–529; it reads KMSKS. Lys528 provides a ligand contact to ATP. Residues 809 to 879 adopt a coiled-coil conformation; that stretch reads LAGLLDLEEE…AVRARIKELK (71 aa).

It belongs to the class-I aminoacyl-tRNA synthetase family. ValS type 1 subfamily. Monomer.

The protein localises to the cytoplasm. It carries out the reaction tRNA(Val) + L-valine + ATP = L-valyl-tRNA(Val) + AMP + diphosphate. Catalyzes the attachment of valine to tRNA(Val). As ValRS can inadvertently accommodate and process structurally similar amino acids such as threonine, to avoid such errors, it has a 'posttransfer' editing activity that hydrolyzes mischarged Thr-tRNA(Val) in a tRNA-dependent manner. In Halalkalibacterium halodurans (strain ATCC BAA-125 / DSM 18197 / FERM 7344 / JCM 9153 / C-125) (Bacillus halodurans), this protein is Valine--tRNA ligase.